An 86-amino-acid chain; its full sequence is Large ribosomal subunit protein uL23 (86 aa).

The protein belongs to the universal ribosomal protein uL23 family. In terms of assembly, part of the 50S ribosomal subunit. Contacts protein L29.

Binds to 23S rRNA. One of the proteins that surrounds the polypeptide exit tunnel on the outside of the ribosome. This Methanococcus vannielii (strain ATCC 35089 / DSM 1224 / JCM 13029 / OCM 148 / SB) protein is Large ribosomal subunit protein uL23.